A 530-amino-acid chain; its full sequence is UDP-glucuronosyltransferase 1A8 (530 aa).

The N-terminal stretch at 1–25 (MAPSGCPPSLPLCVCLFLASGFAQA) is a signal peptide. N-linked (GlcNAc...) asparagine glycans are attached at residues Asn-71, Asn-292, and Asn-430. The chain crosses the membrane as a helical span at residues 488–504 (VIGFLLAIVLTVVFIVY).

This sequence belongs to the UDP-glycosyltransferase family. As to quaternary structure, homodimers. Homooligomer. Interacts with UGT1A1, UGT1A3, UGT1A4, UGT1A6, UGT1A7, UGT1A8, UGT1A9 and UGT1A10 to form heterodimers.

It is found in the endoplasmic reticulum membrane. The catalysed reaction is glucuronate acceptor + UDP-alpha-D-glucuronate = acceptor beta-D-glucuronoside + UDP + H(+). It catalyses the reaction 17beta-estradiol + UDP-alpha-D-glucuronate = 17beta-estradiol 3-O-(beta-D-glucuronate) + UDP + H(+). It carries out the reaction 17alpha-estradiol + UDP-alpha-D-glucuronate = 17alpha-estradiol 3-O-(beta-D-glucuronate) + UDP + H(+). The enzyme catalyses estrone + UDP-alpha-D-glucuronate = estrone 3-O-(beta-D-glucuronate) + UDP + H(+). The catalysed reaction is 16alpha,17alpha-estriol + UDP-alpha-D-glucuronate = 16alpha,17alpha-estriol 3-O-(beta-D-glucuronate) + UDP + H(+). It catalyses the reaction 2-hydroxy-17beta-estradiol + UDP-alpha-D-glucuronate = 2-hydroxy-17beta-estradiol 3-O-(beta-D-glucuronate) + UDP + H(+). It carries out the reaction 2-hydroxy-17beta-estradiol + UDP-alpha-D-glucuronate = 17beta-estradiol 2-O-(beta-D-glucuronate) + UDP + H(+). The enzyme catalyses 2-hydroxyestrone + UDP-alpha-D-glucuronate = 2-hydroxyestrone 3-O-(beta-D-glucuronate) + UDP + H(+). The catalysed reaction is 4-hydroxy-17beta-estradiol + UDP-alpha-D-glucuronate = 4-hydroxy-17beta-estradiol 3-O-(beta-D-glucuronate) + UDP + H(+). It catalyses the reaction 4-hydroxy-17beta-estradiol + UDP-alpha-D-glucuronate = 17beta-estradiol 4-O-(beta-D-glucuronate) + UDP + H(+). It carries out the reaction 4-hydroxyestrone + UDP-alpha-D-glucuronate = 4-hydroxyestrone 3-O-(beta-D-glucuronate) + UDP + H(+). The enzyme catalyses 4-hydroxyestrone + UDP-alpha-D-glucuronate = estrone 4-O-(beta-D-glucuronate) + UDP + H(+). The catalysed reaction is 2-methoxy-17beta-estradiol + UDP-alpha-D-glucuronate = 2-methoxy-17beta-estradiol 3-O-(beta-D-glucuronate) + UDP + H(+). It catalyses the reaction 2-methoxyestrone + UDP-alpha-D-glucuronate = 2-methoxyestrone 3-O-(beta-D-glucuronate) + UDP + H(+). It carries out the reaction 4-methoxy-17beta-estradiol + UDP-alpha-D-glucuronate = 4-methoxy-17beta-estradiol 3-O-(beta-D-glucuronate) + UDP + H(+). The enzyme catalyses 4-methoxyestrone + UDP-alpha-D-glucuronate = 4-methoxyestrone 3-O-(beta-D-glucuronate) + UDP + H(+). The catalysed reaction is 17beta-hydroxy-5alpha-androstan-3-one + UDP-alpha-D-glucuronate = 5alpha-dihydrotestosterone 17-O-(beta-D-glucuronate) + UDP + H(+). It catalyses the reaction 5alpha-dihydrotestosterone 17-O-(beta-D-glucuronate) + UDP-alpha-D-glucuronate = 5alpha-dihydrotestosterone 17-O-[beta-D-glucuronosyl-(1-&gt;2)-glucuronate] + UDP + H(+). It carries out the reaction prunetin + UDP-alpha-D-glucuronate = prunetin-4'-O-beta-D-glucuronide + UDP. The enzyme catalyses prunetin + UDP-alpha-D-glucuronate = prunetin-5-O-beta-D-glucuronide + UDP. The catalysed reaction is (E)-ferulate + UDP-alpha-D-glucuronate = (E)-4-O-(beta-D-glucuronosyl)-ferulate + UDP + H(+). It catalyses the reaction (E)-ferulate + UDP-alpha-D-glucuronate = (E)-ferulic acid beta-D-glucuronate ester + UDP. It carries out the reaction candesartan + UDP-alpha-D-glucuronate = candesartan O-beta-D-glucuronoside + UDP. The enzyme catalyses mycophenolate + UDP-alpha-D-glucuronate = mycophenolate 7-O-beta-D-glucuronide + UDP + H(+). In terms of biological role, UDP-glucuronosyltransferase (UGT) that catalyzes phase II biotransformation reactions in which lipophilic substrates are conjugated with glucuronic acid to increase the metabolite's water solubility, thereby facilitating excretion into either the urine or bile. Essential for the elimination and detoxification of drugs, xenobiotics and endogenous compounds. Catalyzes the glucuronidation of endogenous steroid hormones such as androgens and estrogens. Produces dihydrotestosterone (DHT) diglucuronide from the DHT after two subsequent glucoronidation steps. Involved in the glucuronidation of the phytochemical ferulic acid at the phenolic or the carboxylic acid group. Also catalyzes the glucuronidation of the isoflavones genistein, daidzein, glycitein, formononetin, biochanin A and prunetin, which are phytoestrogens with anticancer and cardiovascular properties. Involved in the glucuronidation of the AGTR1 angiotensin receptor antagonist caderastan, a drug which can inhibit the effect of angiotensin II. Also metabolizes mycophenolate, an immunosuppressive agent. The chain is UDP-glucuronosyltransferase 1A8 from Rattus norvegicus (Rat).